The primary structure comprises 521 residues: (+)-kolavenyl diphosphate synthase (521 aa).

Mg(2+) is bound by residues D311 and D313. The short motif at 311–314 (DGDD) is the DXDD motif element.

Belongs to the terpene synthase family. The cofactor is Mg(2+).

It catalyses the reaction (2E,6E,10E)-geranylgeranyl diphosphate = (+)-kolavenyl diphosphate. In terms of biological role, involved in the biosynthesis of (+)-O-methylkolavelool. Catalyzes the conversion of geranylgeranyl diphosphate into (+)-kolavenyl diphosphate. This chain is (+)-kolavenyl diphosphate synthase, found in Herpetosiphon aurantiacus (strain ATCC 23779 / DSM 785 / 114-95).